The sequence spans 879 residues: Metabotropic glutamate receptor 3 (879 aa).

An N-terminal signal peptide occupies residues Met-1 to Ser-22. At Leu-23–Trp-576 the chain is on the extracellular side. Cys-57 and Cys-99 are disulfide-bonded. L-glutamate-binding positions include Ser-151 and Ala-172–Thr-174. N-linked (GlcNAc...) asparagine glycosylation occurs at Asn-209. Tyr-222 is a binding site for L-glutamate. 7 disulfides stabilise this stretch: Cys-240/Cys-527, Cys-361/Cys-373, Cys-412/Cys-419, Cys-509/Cys-528, Cys-513/Cys-531, Cys-534/Cys-546, and Cys-549/Cys-562. An N-linked (GlcNAc...) asparagine glycan is attached at Asn-292. Residue Asp-301 participates in L-glutamate binding. Position 389 (Lys-389) interacts with L-glutamate. Asn-414 and Asn-439 each carry an N-linked (GlcNAc...) asparagine glycan. The helical transmembrane segment at Val-577–Ile-599 threads the bilayer. Over Lys-600–Glu-613 the chain is Cytoplasmic. Residues Leu-614 to Ala-634 traverse the membrane as a helical segment. The Extracellular segment spans residues Lys-635–Arg-645. The chain crosses the membrane as a helical span at residues Leu-646–Asn-664. Over Cys-665–Gln-688 the chain is Cytoplasmic. Residues Val-689–Leu-709 traverse the membrane as a helical segment. At Glu-710–Asp-734 the chain is on the extracellular side. A helical transmembrane segment spans residues Ser-735–Phe-756. Over Lys-757–Lys-769 the chain is Cytoplasmic. Residues Phe-770–Thr-792 traverse the membrane as a helical segment. Residues Ser-793 to Thr-802 are Extracellular-facing. Residues Met-803 to Phe-828 traverse the membrane as a helical segment. Topologically, residues Gln-829–Leu-879 are cytoplasmic.

The protein belongs to the G-protein coupled receptor 3 family. Interacts with TAMALIN.

It localises to the cell membrane. Functionally, G-protein coupled receptor for glutamate. Ligand binding causes a conformation change that triggers signaling via guanine nucleotide-binding proteins (G proteins) and modulates the activity of down-stream effectors. Signaling inhibits adenylate cyclase activity. This chain is Metabotropic glutamate receptor 3 (GRM3), found in Pongo abelii (Sumatran orangutan).